Reading from the N-terminus, the 768-residue chain is cGMP-dependent protein kinase, isozyme 1 (768 aa).

The interval 1 to 192 (MAAGMLTDRE…NDFLKNIDAS (192 aa)) is regulatory. Residues 114–127 (PLASTSSASPSGRT) are compositionally biased toward low complexity. Residues 114–134 (PLASTSSASPSGRTSADEVRP) are disordered. Residues 249 to 252 (GELA), 259 to 260 (RT), Arg-366, 375 to 378 (GEQA), 385 to 386 (RT), and Tyr-421 each bind 3',5'-cyclic GMP. Residues 457–717 (LEVVSTLGIG…IQDIKKHKWF (261 aa)) enclose the Protein kinase domain. ATP is bound by residues 463-471 (LGIGGFGRV) and Lys-488. Asp-582 (proton acceptor) is an active-site residue. Residues 718-768 (LGFDWDGLASQLLIPPFVRPIAHPTDVRYFDRFPCDLNEPPDELSGWDADF) form the AGC-kinase C-terminal domain.

It belongs to the protein kinase superfamily. AGC Ser/Thr protein kinase family. cGMP subfamily. In terms of assembly, homodimer. It depends on Mg(2+) as a cofactor. In terms of processing, autophosphorylated. In terms of tissue distribution, in embryo stage 13, expression is seen in a few large, irregular cells having the appearance of hemocytes or macrophages. In adults, expression is seen in optic lamina and weakly in testis.

It catalyses the reaction L-seryl-[protein] + ATP = O-phospho-L-seryl-[protein] + ADP + H(+). It carries out the reaction L-threonyl-[protein] + ATP = O-phospho-L-threonyl-[protein] + ADP + H(+). Binding of cGMP results in enzyme activation. In Drosophila melanogaster (Fruit fly), this protein is cGMP-dependent protein kinase, isozyme 1 (Pkg21D).